Reading from the N-terminus, the 84-residue chain is MKTLLLTLVVVTIVCLDLGYTRKCLNTPLPLIYKTCPIGQDKCIKMTIKKLPSKYDVIRGCTDICPKSSADVVVVCCDTNKCNK.

An N-terminal signal peptide occupies residues 1 to 21 (MKTLLLTLVVVTIVCLDLGYT). 4 disulfides stabilise this stretch: C24–C43, C36–C61, C65–C76, and C77–C82.

This sequence belongs to the three-finger toxin family. Short-chain subfamily. Aminergic toxin sub-subfamily. As to expression, expressed by the venom gland.

The protein localises to the secreted. Acts as a beta-blocker by binding to beta-1 and beta-2 adrenergic receptors (ADRB1 and ADRB2). It dose-dependently decreases the heart rate (bradycardia), whereas conventional cardiotoxins increases it. At 100 mg/kg, intraperitoneal injection into mice provokes labored breathing, impaired locomotion, lack of response to external stimuli, and death (after 30 minutes). In Ophiophagus hannah (King cobra), this protein is Beta-cardiotoxin CTX23.